The sequence spans 488 residues: MWESKFAKESLTFDDVLLIPAQSDILPKDVDLSVQLSDKVKLNIPVISAGMDTVTESKMAIAMARQGGLGVIHKNMGVEEQADEVQKVKRSENGVISNPFFLTPEESVYEAEALMGKYRISGVPIVDNKEDRNLVGILTNRDLRFIEDFSIKIVDVMTQENLITAPVNTTLEEAEKILQKHKIEKLPLVKDGRLEGLITIKDIEKVIEFPNAAKDEHGRLLVAAAIGISKDTDIRAQKLVEAGVDVLVIDTAHGHSKGVIDQVKHIKKTYPEITLVAGNVATAEATKDLFEAGADIVKVGIGPGSICTTRVVAGVGVPQITAIYDCATEARKHGKAIIADGGIKFSGDIIKALAAGGHAVMLGSLLAGTEESPGATEIFQGRQYKVYRGMGSLGAMEKGSNDRYFQEDKAPKKFVPEGIEGRTAYKGALQDTIYQLMGGVRAGMGYTGSHDLRELREEAQFTRMGPAGLAESHPHNIQITKESPNYSF.

CBS domains are found at residues 95–153 (VISN…SIKI) and 157–216 (MTQE…AKDE). Residues aspartate 250 and 300–302 (GIG) contribute to the NAD(+) site. K(+)-binding residues include glycine 302 and glycine 304. Serine 305 provides a ligand contact to IMP. Residue cysteine 307 participates in K(+) binding. The active-site Thioimidate intermediate is the cysteine 307. IMP-binding positions include 340 to 342 (DGG), 363 to 364 (GS), and 387 to 391 (YRGMG). The active-site Proton acceptor is the arginine 403. Glutamate 417 is an IMP binding site. The disordered stretch occupies residues 468–488 (GLAESHPHNIQITKESPNYSF). Glutamate 471, serine 472, and histidine 473 together coordinate K(+). Polar residues predominate over residues 475–488 (HNIQITKESPNYSF).

It belongs to the IMPDH/GMPR family. In terms of assembly, homotetramer. K(+) is required as a cofactor.

It carries out the reaction IMP + NAD(+) + H2O = XMP + NADH + H(+). It participates in purine metabolism; XMP biosynthesis via de novo pathway; XMP from IMP: step 1/1. Mycophenolic acid (MPA) is a non-competitive inhibitor that prevents formation of the closed enzyme conformation by binding to the same site as the amobile flap. In contrast, mizoribine monophosphate (MZP) is a competitive inhibitor that induces the closed conformation. MPA is a potent inhibitor of mammalian IMPDHs but a poor inhibitor of the bacterial enzymes. MZP is a more potent inhibitor of bacterial IMPDH. Its function is as follows. Catalyzes the conversion of inosine 5'-phosphate (IMP) to xanthosine 5'-phosphate (XMP), the first committed and rate-limiting step in the de novo synthesis of guanine nucleotides, and therefore plays an important role in the regulation of cell growth. The polypeptide is Inosine-5'-monophosphate dehydrogenase (Staphylococcus aureus (strain Mu50 / ATCC 700699)).